We begin with the raw amino-acid sequence, 193 residues long: MKSYFFFILSNILIDNFILVKFLGLCPFIGASNQIKQAFGISFATSFVVVVSTVLLWFVNFFILLPFDLVYLRIIVYMLIISFGVQLIEIILRGTSPILYRILGIFLPLITTNCAVLAIPLFSLYLNHTFLESILYAVSASFGFTLVMVIFSSIRERILLSDVPLAFQGSPIVLITVSLISIVFMGFKGLVRI.

Helical transmembrane passes span 5–25 (FFFILSNILIDNFILVKFLGL), 47–67 (FVVVVSTVLLWFVNFFILLPF), 72–92 (LRIIVYMLIISFGVQLIEIIL), 102–122 (ILGIFLPLITTNCAVLAIPLF), 134–154 (ILYAVSASFGFTLVMVIFSSI), and 171–191 (PIVLITVSLISIVFMGFKGLV).

It belongs to the NqrDE/RnfAE family. As to quaternary structure, the complex is composed of six subunits: RnfA, RnfB, RnfC, RnfD, RnfE and RnfG.

It is found in the cell inner membrane. In terms of biological role, part of a membrane-bound complex that couples electron transfer with translocation of ions across the membrane. This is Ion-translocating oxidoreductase complex subunit A from Buchnera aphidicola subsp. Schizaphis graminum (strain Sg).